A 208-amino-acid polypeptide reads, in one-letter code: MIGLVGKKLGMTRIFFEEYTSIPVTAIEILDNIVVQVKTIENDNYESIQLTTGFKKEKKVLKSEYGHFLKFNVSVGRGLWEFKCKNSSNYSSGQKITINFFKNIKKLDITGISKGKGFAGTVKRWNFRMQDATHGNSLSHRVPGSIGQNQTPGHVFKGKKMSGHLGDQRTTIQNLKIVKIDDINKIILIKGSIPGSIGSDILLKPSIK.

Glutamine 150 bears the N5-methylglutamine mark.

Belongs to the universal ribosomal protein uL3 family. In terms of assembly, part of the 50S ribosomal subunit. Forms a cluster with proteins L14 and L19. Post-translationally, methylated by PrmB.

One of the primary rRNA binding proteins, it binds directly near the 3'-end of the 23S rRNA, where it nucleates assembly of the 50S subunit. This Buchnera aphidicola subsp. Cinara cedri (strain Cc) protein is Large ribosomal subunit protein uL3.